The primary structure comprises 287 residues: Elongation factor Ts (287 aa).

Residues 80–83 (TDFL) are involved in Mg(2+) ion dislocation from EF-Tu.

This sequence belongs to the EF-Ts family.

The protein resides in the cytoplasm. Functionally, associates with the EF-Tu.GDP complex and induces the exchange of GDP to GTP. It remains bound to the aminoacyl-tRNA.EF-Tu.GTP complex up to the GTP hydrolysis stage on the ribosome. The protein is Elongation factor Ts of Pseudomonas fluorescens (strain Pf0-1).